A 624-amino-acid polypeptide reads, in one-letter code: Bifunctional 3'-phosphoadenosine 5'-phosphosulfate synthase 1 (624 aa).

N-acetylmethionine is present on Met1. Residues 1–225 (MELPGSLCKK…VVELLQERDI (225 aa)) are adenylyl-sulfate kinase. At Lys12 the chain carries N6-acetyllysine. Residue 62–67 (GAGKTT) coordinates ATP. Adenosine 5'-phosphosulfate is bound by residues 89–92 (DNIR), Phe101, 106–109 (REEN), 132–133 (IS), Lys171, and 184–185 (GF). Residues Cys207, Cys212, 419-422 (QLRN), 521-525 (GRDPA), and Ala563 each bind ATP. The interval 234 to 624 (VKELYVPENK…AEYYKALEKA (391 aa)) is sulfate adenylyltransferase.

This sequence in the N-terminal section; belongs to the APS kinase family. It in the C-terminal section; belongs to the sulfate adenylyltransferase family. In terms of assembly, homodimer.

It catalyses the reaction sulfate + ATP + H(+) = adenosine 5'-phosphosulfate + diphosphate. It carries out the reaction adenosine 5'-phosphosulfate + ATP = 3'-phosphoadenylyl sulfate + ADP + H(+). The protein operates within sulfur metabolism; sulfate assimilation. Bifunctional enzyme with both ATP sulfurylase and APS kinase activity, which mediates two steps in the sulfate activation pathway. The first step is the transfer of a sulfate group to ATP to yield adenosine 5'-phosphosulfate (APS), and the second step is the transfer of a phosphate group from ATP to APS yielding 3'-phosphoadenylylsulfate (PAPS: activated sulfate donor used by sulfotransferase). In mammals, PAPS is the sole source of sulfate; APS appears to be only an intermediate in the sulfate-activation pathway. Required for normal biosynthesis of sulfated L-selectin ligands in endothelial cells. The chain is Bifunctional 3'-phosphoadenosine 5'-phosphosulfate synthase 1 (PAPSS1) from Cavia porcellus (Guinea pig).